Reading from the N-terminus, the 575-residue chain is Cytokinin dehydrogenase 1 (575 aa).

A signal peptide spans methionine 1–glycine 31. Asparagine 14, asparagine 38, and asparagine 115 each carry an N-linked (GlcNAc...) asparagine glycan. One can recognise an FAD-binding PCMH-type domain in the interval tyrosine 84 to alanine 262. FAD-binding residues include alanine 120, glycine 122, and glycine 124. Histidine 125 is modified (pros-8alpha-FAD histidine). Residues serine 126, glutamine 130, aspartate 186, threonine 191, serine 197, isoleucine 201, and isoleucine 252 each coordinate FAD. Asparagine 303, asparagine 318, asparagine 437, and asparagine 467 each carry an N-linked (GlcNAc...) asparagine glycan. Residues tyrosine 498 and glutamine 536 each coordinate FAD.

The protein belongs to the oxygen-dependent FAD-linked oxidoreductase family. Requires FAD as cofactor. Expressed in shoot apexes, lateral shoot meristems, growing tissues of young flowers, and weakly at the root-hypocotyl junction.

It is found in the vacuole. It catalyses the reaction N(6)-dimethylallyladenine + A + H2O = 3-methyl-2-butenal + adenine + AH2. In terms of biological role, catalyzes the oxidation of cytokinins, a family of N(6)-substituted adenine derivatives that are plant hormones, where the substituent is an isopentenyl group. Catalyzes in vitro the oxidation of various types of cytokinin nucleotides that are known as direct products of cytokinin biosynthesis. Promotes adventitious root initiation downstream of MYC2-dependent jasmonate signaling. Cytokinin degraded by CKX1 is required for cell division in the female gametophyte by modulating the expression of cell cycle genes. The protein is Cytokinin dehydrogenase 1 (CKX1) of Arabidopsis thaliana (Mouse-ear cress).